The sequence spans 384 residues: O-phospho-L-seryl-tRNA:Cys-tRNA synthase 1 (384 aa).

Pyridoxal 5'-phosphate is bound by residues 88-89 (AR), asparagine 195, and 218-220 (SGH). Lysine 221 is modified (N6-(pyridoxal phosphate)lysine).

This sequence belongs to the SepCysS family. As to quaternary structure, homodimer. Interacts with SepRS. The cofactor is pyridoxal 5'-phosphate.

The catalysed reaction is O-phospho-L-seryl-tRNA(Cys) + hydrogen sulfide + H(+) = L-cysteinyl-tRNA(Cys) + phosphate. In terms of biological role, converts O-phospho-L-seryl-tRNA(Cys) (Sep-tRNA(Cys)) to L-cysteinyl-tRNA(Cys) (Cys-tRNA(Cys)). The chain is O-phospho-L-seryl-tRNA:Cys-tRNA synthase 1 from Methanocella arvoryzae (strain DSM 22066 / NBRC 105507 / MRE50).